A 513-amino-acid polypeptide reads, in one-letter code: Ribonuclease Y (513 aa).

The chain crosses the membrane as a helical span at residues 6–26; it reads YIIIAVVIIIICVILGLYVVD. One can recognise a KH domain in the interval 203–288; that stretch reads TVHVVNLPND…EMVEKAKKEV (86 aa). The HD domain occupies 329-422; it reads VLKHSIEVSH…VQAADAISAA (94 aa).

Belongs to the RNase Y family.

The protein localises to the cell membrane. Functionally, endoribonuclease that initiates mRNA decay. This is Ribonuclease Y from Clostridium botulinum (strain Loch Maree / Type A3).